Consider the following 280-residue polypeptide: Phosphatidylserine decarboxylase proenzyme (280 aa).

Active-site charge relay system; for autoendoproteolytic cleavage activity residues include aspartate 88, histidine 144, and serine 247. Serine 247 (schiff-base intermediate with substrate; via pyruvic acid; for decarboxylase activity) is an active-site residue. Serine 247 bears the Pyruvic acid (Ser); by autocatalysis mark.

This sequence belongs to the phosphatidylserine decarboxylase family. PSD-B subfamily. Prokaryotic type I sub-subfamily. As to quaternary structure, heterodimer of a large membrane-associated beta subunit and a small pyruvoyl-containing alpha subunit. It depends on pyruvate as a cofactor. Is synthesized initially as an inactive proenzyme. Formation of the active enzyme involves a self-maturation process in which the active site pyruvoyl group is generated from an internal serine residue via an autocatalytic post-translational modification. Two non-identical subunits are generated from the proenzyme in this reaction, and the pyruvate is formed at the N-terminus of the alpha chain, which is derived from the carboxyl end of the proenzyme. The autoendoproteolytic cleavage occurs by a canonical serine protease mechanism, in which the side chain hydroxyl group of the serine supplies its oxygen atom to form the C-terminus of the beta chain, while the remainder of the serine residue undergoes an oxidative deamination to produce ammonia and the pyruvoyl prosthetic group on the alpha chain. During this reaction, the Ser that is part of the protease active site of the proenzyme becomes the pyruvoyl prosthetic group, which constitutes an essential element of the active site of the mature decarboxylase.

It is found in the cell membrane. The enzyme catalyses a 1,2-diacyl-sn-glycero-3-phospho-L-serine + H(+) = a 1,2-diacyl-sn-glycero-3-phosphoethanolamine + CO2. Its pathway is phospholipid metabolism; phosphatidylethanolamine biosynthesis; phosphatidylethanolamine from CDP-diacylglycerol: step 2/2. Functionally, catalyzes the formation of phosphatidylethanolamine (PtdEtn) from phosphatidylserine (PtdSer). The protein is Phosphatidylserine decarboxylase proenzyme of Xanthomonas axonopodis pv. citri (strain 306).